Here is a 232-residue protein sequence, read N- to C-terminus: Small ribosomal subunit protein uS2 (232 aa).

Belongs to the universal ribosomal protein uS2 family.

The chain is Small ribosomal subunit protein uS2 from Heliobacterium modesticaldum (strain ATCC 51547 / Ice1).